Here is a 436-residue protein sequence, read N- to C-terminus: Prenyltransferase nscD (436 aa).

It belongs to the tryptophan dimethylallyltransferase family.

It participates in secondary metabolite biosynthesis. Its function is as follows. Prenyltransferase; part of the gene cluster that mediates the biosynthesis of neosartoricin B, a prenylated anthracenone that probably exhibits T-cell antiproliferative activity, suggestive of a physiological role as an immunosuppressive agent. The non-reducing polyketide synthase nscA probably synthesizes and cyclizes the decaketide backbone. The hydrolase nscB then mediates the product release through hydrolysis followed by spontaneous decarboxylation. The prenyltransferase nscD catalyzes the addition of the dimethylallyl group to the aromatic C5. The FAD-dependent monooxygenase nscC is then responsible for the stereospecific hydroxylation at C2. Neosartoricin B can be converted into two additional compounds neosartoricins C and D. Neosartoricin C is a spirocyclic compound that is cyclized through the attack of C3 hydroxyl on C14, followed by dehydration. On the other hand, neosartoricin D is a further cyclized compound in which attack of C2 on C14 in neosartoricin C results in the formation of the acetal-containing dioxabicyclo-octanone ring. Both of these compounds are novel and possibly represent related metabolites of the gene cluster. The protein is Prenyltransferase nscD of Trichophyton tonsurans (strain CBS 112818) (Scalp ringworm fungus).